The sequence spans 242 residues: DNA repair protein RecO (242 aa).

This sequence belongs to the RecO family. As to quaternary structure, monomer.

In terms of biological role, involved in DNA repair and RecF pathway recombination. The chain is DNA repair protein RecO from Salmonella gallinarum (strain 287/91 / NCTC 13346).